Here is a 310-residue protein sequence, read N- to C-terminus: N-acetyl-gamma-glutamyl-phosphate reductase (310 aa).

Cys-117 is an active-site residue.

This sequence belongs to the NAGSA dehydrogenase family. Type 2 subfamily.

The protein resides in the cytoplasm. The catalysed reaction is N-acetyl-L-glutamate 5-semialdehyde + phosphate + NADP(+) = N-acetyl-L-glutamyl 5-phosphate + NADPH + H(+). The protein operates within amino-acid biosynthesis; L-arginine biosynthesis; N(2)-acetyl-L-ornithine from L-glutamate: step 3/4. Its function is as follows. Catalyzes the NADPH-dependent reduction of N-acetyl-5-glutamyl phosphate to yield N-acetyl-L-glutamate 5-semialdehyde. This chain is N-acetyl-gamma-glutamyl-phosphate reductase, found in Rhizobium leguminosarum bv. trifolii (strain WSM2304).